The chain runs to 67 residues: Mitotic-spindle organizing protein 1A (67 aa).

It belongs to the MOZART1 family. As to quaternary structure, part of the gamma-tubulin complex. Interacts with GIP1 and GCP3. As to expression, mostly expressed in siliques and flowers, and, to a lower extent, in leaves, roots and seedlings, with highest levels in young tissues, meristematic cells, and the vasculature.

It is found in the cytoplasm. Its subcellular location is the cytoskeleton. It localises to the microtubule organizing center. The protein resides in the spindle. The protein localises to the nucleus. It is found in the phragmoplast. Its subcellular location is the nucleus envelope. Its function is as follows. Required for gamma-tubulin complex recruitment to the microtubule organizing centers (MTOCs). During mitosis, modulates gamma-tubulin complex localization, spindle stability and chromosomal segregation. Necessary for gametophyte development and embryogenesis. The sequence is that of Mitotic-spindle organizing protein 1A (GIP2) from Arabidopsis thaliana (Mouse-ear cress).